We begin with the raw amino-acid sequence, 1419 residues long: Multidrug resistance protein 1 (1419 aa).

Residues 1 to 37 are r domain; regulates transporter activity; it reads MGKEQKEKKDGNLSIKEEVEKELNKKSTAELFRKIKN. The Cytoplasmic segment spans residues 1–60; sequence MGKEQKEKKDGNLSIKEEVEKELNKKSTAELFRKIKNEKISFFLPFKCLPAQHRKLLFIS. In terms of domain architecture, ABC transmembrane type-1 1 spans 58–345; that stretch reads FISFVCAVLS…ILPNITEYMK (288 aa). A helical transmembrane segment spans residues 61–81; the sequence is FVCAVLSGGTLPFFISVFGVI. Residues 82–90 are Vacuolar-facing; that stretch reads LKNMNLGDD. The chain crosses the membrane as a helical span at residues 91–111; that stretch reads INPIILSLVSIGLVQFILSMI. Residues 112–168 lie on the Cytoplasmic side of the membrane; that stretch reads SSYCMDVITSKILKTLKLEYLRSVFYQDGQFHDNNPGSKLRSDLDFYLEQVSSGIGT. Residues 169–189 traverse the membrane as a helical segment; that stretch reads KFITIFTYASSFLGLYIWSLI. At 190 to 191 the chain is on the vacuolar side; that stretch reads KN. A helical membrane pass occupies residues 192 to 212; that stretch reads ARLTLCITCVFPLIYVCGVIC. Topologically, residues 213 to 275 are cytoplasmic; that stretch reads NKKVKLNKKT…KYILKANFVE (63 aa). A helical transmembrane segment spans residues 276–296; sequence ALHIGLINGLILVSYAFGFWY. The Vacuolar segment spans residues 297–316; that stretch reads GTRIIINSATNQYPNNDFNG. A helical membrane pass occupies residues 317–337; the sequence is ASVISILLGVLISMFMLTIIL. Residues 338–788 are Cytoplasmic-facing; that stretch reads PNITEYMKAL…YKEIFSYKKD (451 aa). Positions 378–662 constitute an ABC transporter 1 domain; it reads IEFKNVRFHY…NNNNNNNNNK (285 aa). Y387, T389, R390, S415, C417, G418, K419, S420, T421, Q462, K562, S564, G566, and Q567 together coordinate ATP. A Mg(2+)-binding site is contributed by Q462. Disordered regions lie at residues 639-665 and 697-752; these read ERSDNNNNNNNDDNNNNNNNNNNKINN and SSNK…TAEN. Composition is skewed to low complexity over residues 643–665 and 697–715; these read NNNNNNNDDNNNNNNNNNNKINN and SSNKSSNNGNDNGSDNKSS. The span at 723 to 749 shows a compositional bias: polar residues; sequence GNDADNMNSLSIHENENISNNRNCKNT. The chain crosses the membrane as a helical span at residues 789-809; that stretch reads VTIIFFSILVAGGLYPVFALL. In terms of domain architecture, ABC transmembrane type-1 2 spans 791 to 1083; sequence IIFFSILVAG…GSYAGKLMSL (293 aa). Over 810 to 829 the chain is Vacuolar; the sequence is YARYVSTLFDFANLEYNSNK. Residues 830-850 traverse the membrane as a helical segment; that stretch reads YSIYILLIAIAMFISETLKNY. Over 851–907 the chain is Cytoplasmic; that stretch reads YNNKIGEKVEKTMKRRLFENILYQEMSFFDQDKNTPGVLSAHINRDVHLLKTGLVNN. Transmembrane regions (helical) follow at residues 908–928 and 929–949; these read IVIFSHFIMLFLVSMVMSFYF and CPIVAAVLTFIYFINMRVFAV. Residues 950–1032 are Cytoplasmic-facing; sequence RARLTKSKEI…RIIVNAALWG (83 aa). A helical membrane pass occupies residues 1033–1053; the sequence is FSQSAQLFINSFAYWFGSFLI. The Vacuolar segment spans residues 1054–1057; it reads KRGT. A helical membrane pass occupies residues 1058–1078; that stretch reads ILVDDFMKSLFTFIFTGSYAG. Over 1079-1419 the chain is Cytoplasmic; it reads KLMSLKGDSE…IYKKYVKLAK (341 aa). In terms of domain architecture, ABC transporter 2 spans 1126–1416; it reads VDIKDVNFRY…QDGIYKKYVK (291 aa). Residues Y1135, R1138, T1163, G1164, G1166, K1167, S1168, T1169, Q1256, L1312, S1313, G1315, and Q1316 each coordinate ATP. S1168 contacts Mg(2+). Residue Q1256 coordinates Mg(2+).

It belongs to the ABC transporter superfamily. ABCB family. Multidrug resistance exporter (TC 3.A.1.201) subfamily.

The protein resides in the vacuole membrane. It catalyses the reaction ATP + H2O + xenobioticSide 1 = ADP + phosphate + xenobioticSide 2.. Functionally, energy-dependent efflux pump responsible for decreased drug accumulation in multidrug-resistant cells. Transports lumefantrine, mefloquine, chloroquine, quinine, quinidine, amodiaquine, piperaquine, dihydroartemisinin and quinacrine. In Plasmodium falciparum (isolate 3D7), this protein is Multidrug resistance protein 1.